The following is a 130-amino-acid chain: UPF0212 protein TSIB_1358 (130 aa).

This sequence belongs to the UPF0212 family.

This Thermococcus sibiricus (strain DSM 12597 / MM 739) protein is UPF0212 protein TSIB_1358.